Consider the following 203-residue polypeptide: MIPQLIVGLGNPEPKYDQTRHNIGFAAVDALARAWNISLAENRKFQGQYGEGTAPGGVKIRLLKPLTYMNRSGQAIQAVTSWYKLSGESVLVIYDDLDLPLGKTRLRLSGSAGGHNGMKSAIAHLSTQNFPRLRIGIGKPKNAVNGDNSETVSHVLGKFSATETQLMSLVLQFVVECVELSLKQGVEKAMNRCNSCTVEAPKS.

Position 16 (Y16) interacts with tRNA. The Proton acceptor role is filled by H21. Residues Y68, N70, and N116 each contribute to the tRNA site.

The protein belongs to the PTH family. Monomer.

It localises to the cytoplasm. The catalysed reaction is an N-acyl-L-alpha-aminoacyl-tRNA + H2O = an N-acyl-L-amino acid + a tRNA + H(+). In terms of biological role, hydrolyzes ribosome-free peptidyl-tRNAs (with 1 or more amino acids incorporated), which drop off the ribosome during protein synthesis, or as a result of ribosome stalling. Functionally, catalyzes the release of premature peptidyl moieties from peptidyl-tRNA molecules trapped in stalled 50S ribosomal subunits, and thus maintains levels of free tRNAs and 50S ribosomes. The chain is Peptidyl-tRNA hydrolase from Nostoc sp. (strain PCC 7120 / SAG 25.82 / UTEX 2576).